The primary structure comprises 448 residues: Protein chibby homolog 2 (448 aa).

Phosphoserine occurs at positions 41, 86, 89, 97, 124, 144, 148, and 150. Residues 164–198 are a coiled coil; it reads KECMLQEENKSLREENKALREENRMLSKENKILQV. 2 positions are modified to phosphoserine: S212 and S225. Positions 242–267 form a coiled coil; that stretch reads KEDSTLQLLREENRALQQLLEQKQAY. Residues 270 to 323 form a disordered region; sequence QAEDTAAPAEESKPAPSPHEEPCSPGLLQDQGSGLSSRFEEPKGPPARQEDSKE. Basic and acidic residues-rich tracts occupy residues 279-291 and 307-323; these read EESKPAPSPHEEP and RFEEPKGPPARQEDSKE. Phosphoserine occurs at positions 335 and 338. Residues 356 to 414 adopt a coiled-coil conformation; it reads LQLLREMRQALQALLKENRLLQEENRTLQVLRAEHRGFQEENKALWENNKLKLQQKLVI.

It belongs to the chibby family. SPERT subfamily. Homodimer. Binds to NEK1. Testis-specific.

The sequence is that of Protein chibby homolog 2 from Homo sapiens (Human).